The primary structure comprises 250 residues: Ubiquinone biosynthesis O-methyltransferase (250 aa).

Residues R41, G72, D93, and M136 each contribute to the S-adenosyl-L-methionine site.

This sequence belongs to the methyltransferase superfamily. UbiG/COQ3 family.

It catalyses the reaction a 3-demethylubiquinol + S-adenosyl-L-methionine = a ubiquinol + S-adenosyl-L-homocysteine + H(+). The enzyme catalyses a 3-(all-trans-polyprenyl)benzene-1,2-diol + S-adenosyl-L-methionine = a 2-methoxy-6-(all-trans-polyprenyl)phenol + S-adenosyl-L-homocysteine + H(+). It participates in cofactor biosynthesis; ubiquinone biosynthesis. O-methyltransferase that catalyzes the 2 O-methylation steps in the ubiquinone biosynthetic pathway. This Agrobacterium fabrum (strain C58 / ATCC 33970) (Agrobacterium tumefaciens (strain C58)) protein is Ubiquinone biosynthesis O-methyltransferase.